A 78-amino-acid chain; its full sequence is DNA-directed RNA polymerase subunit omega (78 aa).

Belongs to the RNA polymerase subunit omega family. As to quaternary structure, in cyanobacteria the RNAP catalytic core is composed of 2 alpha, 1 beta, 1 beta', 1 gamma and 1 omega subunit. When a sigma factor is associated with the core the holoenzyme is formed, which can initiate transcription.

The enzyme catalyses RNA(n) + a ribonucleoside 5'-triphosphate = RNA(n+1) + diphosphate. In terms of biological role, promotes RNA polymerase assembly. Latches the N- and C-terminal regions of the beta' subunit thereby facilitating its interaction with the beta and alpha subunits. The chain is DNA-directed RNA polymerase subunit omega from Prochlorococcus marinus subsp. pastoris (strain CCMP1986 / NIES-2087 / MED4).